The chain runs to 291 residues: Bifunctional protein FolD (291 aa).

NADP(+) is bound by residues 167-169 (GRS), serine 192, and isoleucine 233.

The protein belongs to the tetrahydrofolate dehydrogenase/cyclohydrolase family. Homodimer.

It carries out the reaction (6R)-5,10-methylene-5,6,7,8-tetrahydrofolate + NADP(+) = (6R)-5,10-methenyltetrahydrofolate + NADPH. It catalyses the reaction (6R)-5,10-methenyltetrahydrofolate + H2O = (6R)-10-formyltetrahydrofolate + H(+). It functions in the pathway one-carbon metabolism; tetrahydrofolate interconversion. In terms of biological role, catalyzes the oxidation of 5,10-methylenetetrahydrofolate to 5,10-methenyltetrahydrofolate and then the hydrolysis of 5,10-methenyltetrahydrofolate to 10-formyltetrahydrofolate. The protein is Bifunctional protein FolD of Dichelobacter nodosus (strain VCS1703A).